A 124-amino-acid chain; its full sequence is Heat-labile enterotoxin B chain (124 aa).

A signal peptide spans 1–21 (MNKVKCYVLFTALLSSLYAHG). Cys30 and Cys107 form a disulfide bridge.

In terms of assembly, heterohexamer of one A chain and of five B chains.

The biological activity of the toxin is produced by the A chain, which activates intracellular adenyl cyclase. This is Heat-labile enterotoxin B chain (eltB) from Escherichia coli.